We begin with the raw amino-acid sequence, 67 residues long: DNA-directed RNA polymerase subunit omega (67 aa).

It belongs to the RNA polymerase subunit omega family. As to quaternary structure, the RNAP catalytic core consists of 2 alpha, 1 beta, 1 beta' and 1 omega subunit. When a sigma factor is associated with the core the holoenzyme is formed, which can initiate transcription.

The enzyme catalyses RNA(n) + a ribonucleoside 5'-triphosphate = RNA(n+1) + diphosphate. Its function is as follows. Promotes RNA polymerase assembly. Latches the N- and C-terminal regions of the beta' subunit thereby facilitating its interaction with the beta and alpha subunits. The chain is DNA-directed RNA polymerase subunit omega from Ralstonia pickettii (strain 12J).